Consider the following 231-residue polypeptide: L-ribulose-5-phosphate 4-epimerase SgbE (231 aa).

Residues glycine 27–asparagine 28, serine 44–glycine 45, and serine 74–serine 75 each bind substrate. Residues aspartate 76, histidine 95, and histidine 97 each contribute to the Zn(2+) site. Catalysis depends on aspartate 120, which acts as the Proton donor/acceptor. Histidine 171 contacts Zn(2+). Catalysis depends on tyrosine 229, which acts as the Proton donor/acceptor.

This sequence belongs to the aldolase class II family. AraD/FucA subfamily. Requires Zn(2+) as cofactor.

The catalysed reaction is L-ribulose 5-phosphate = D-xylulose 5-phosphate. Functionally, catalyzes the interconversion of L-ribulose 5-phosphate (LRu5P) and D-xylulose 5-phosphate (D-Xu5P) via a retroaldol/aldol mechanism (carbon-carbon bond cleavage analogous to a class II aldolase reaction). May be involved in the utilization of 2,3-diketo-L-gulonate. In Escherichia coli (strain K12), this protein is L-ribulose-5-phosphate 4-epimerase SgbE.